Consider the following 340-residue polypeptide: NADH-quinone oxidoreductase subunit H (340 aa).

The next 8 membrane-spanning stretches (helical) occupy residues 4-24, 78-98, 113-133, 151-171, 184-204, 244-264, 273-293, and 316-336; these read TIGI…PLLI, YLFV…WAVI, VLYL…AGWA, VSYE…AGSM, MLHW…ISGI, SMIL…LSPF, IFFI…FLFV, and VLIP…VAHV.

It belongs to the complex I subunit 1 family. NDH-1 is composed of 14 different subunits. Subunits NuoA, H, J, K, L, M, N constitute the membrane sector of the complex.

It is found in the cell inner membrane. It catalyses the reaction a quinone + NADH + 5 H(+)(in) = a quinol + NAD(+) + 4 H(+)(out). Functionally, NDH-1 shuttles electrons from NADH, via FMN and iron-sulfur (Fe-S) centers, to quinones in the respiratory chain. The immediate electron acceptor for the enzyme in this species is believed to be ubiquinone. Couples the redox reaction to proton translocation (for every two electrons transferred, four hydrogen ions are translocated across the cytoplasmic membrane), and thus conserves the redox energy in a proton gradient. This subunit may bind ubiquinone. This chain is NADH-quinone oxidoreductase subunit H, found in Legionella pneumophila (strain Lens).